A 474-amino-acid polypeptide reads, in one-letter code: Stabilizer of axonemal microtubules 1 (474 aa).

Mn stretches follow at residues 30–64 (KPCLLSEYTENYPFYHSYLPRESFKPRREYQKGPI), 65–97 (PMEGLTTSRRDFGPHKVAPVKVHQYDQFVPSEE), 98–131 (NMDLLTTYKKDYNPYPVCRVDPIKPRDSKYPCSD), 132–165 (KMECLPTYKADYLPWNQPRREPLRLEHKYQPASV), 166–199 (RFDNRTTHQDDYPIKGLVKTISCKPLAMPKLCNI), 200–232 (PLEDVTNYKMSYVAHPVEKRFVHEAEKFRPCEI), 233–266 (PFESLTTQKQSYRGLMGEPAKSLKPLARPPGLDM), 267–299 (PFCNTTEFRDKYQAWPMPRMFSKAPITYVPPED), 300–332 (RMDLLTTVQAHYTCPKGAPAQSCRPALQIKKCG), 333–366 (RFEGSSTTKDDYKQWSSMRTEPVKPVPQLDLPTE), 367–400 (PLDCLTTTRAHYVPHLPINTKSCKPHWSGPRGNV), and 401–434 (PVESQTTYTISFTPKEMGRCLASYPEPPGYTFEE). Residues 446-474 (VSQAGSQQSSHLSVDDSENPNQRELEVLA) form a disordered region. Polar residues predominate over residues 448–457 (QAGSQQSSHL).

It belongs to the FAM154 family. As to quaternary structure, associates with microtubules via the Mn regions. Widely expressed, with highest levels in testis. Expressed in mature spermatozoa (at protein level).

It localises to the cytoplasm. Its subcellular location is the cytoskeleton. The protein resides in the microtubule organizing center. The protein localises to the centrosome. It is found in the centriole. It localises to the cilium basal body. Its subcellular location is the cilium axoneme. The protein resides in the flagellum axoneme. In terms of biological role, may play a role in the regulation of cilium length. Stabilizes microtubules at low temperature. The protein is Stabilizer of axonemal microtubules 1 (SAXO1) of Homo sapiens (Human).